The following is a 119-amino-acid chain: Holo-[acyl-carrier-protein] synthase (119 aa).

Residues aspartate 8 and glutamate 58 each coordinate Mg(2+).

It belongs to the P-Pant transferase superfamily. AcpS family. Requires Mg(2+) as cofactor.

Its subcellular location is the cytoplasm. The catalysed reaction is apo-[ACP] + CoA = holo-[ACP] + adenosine 3',5'-bisphosphate + H(+). Its function is as follows. Transfers the 4'-phosphopantetheine moiety from coenzyme A to a Ser of acyl-carrier-protein. The sequence is that of Holo-[acyl-carrier-protein] synthase from Geobacillus sp. (strain WCH70).